The sequence spans 446 residues: Adenylosuccinate synthetase (446 aa).

Residues 12–18 (GDEGKGK) and 40–42 (GHT) each bind GTP. Residue aspartate 13 is the Proton acceptor of the active site. Residues aspartate 13 and glycine 40 each contribute to the Mg(2+) site. Residues 13–16 (DEGK), 38–41 (NAGH), threonine 128, arginine 142, glutamine 223, threonine 238, and arginine 302 contribute to the IMP site. The active-site Proton donor is the histidine 41. 298–304 (TTTGRRR) serves as a coordination point for substrate. GTP contacts are provided by residues arginine 304, 330–332 (KLD), and 412–414 (SLG).

It belongs to the adenylosuccinate synthetase family. In terms of assembly, homodimer. It depends on Mg(2+) as a cofactor.

It is found in the cytoplasm. It carries out the reaction IMP + L-aspartate + GTP = N(6)-(1,2-dicarboxyethyl)-AMP + GDP + phosphate + 2 H(+). It functions in the pathway purine metabolism; AMP biosynthesis via de novo pathway; AMP from IMP: step 1/2. In terms of biological role, plays an important role in the de novo pathway of purine nucleotide biosynthesis. Catalyzes the first committed step in the biosynthesis of AMP from IMP. The protein is Adenylosuccinate synthetase of Acaryochloris marina (strain MBIC 11017).